Here is a 72-residue protein sequence, read N- to C-terminus: Gas vesicle protein A (72 aa).

This sequence belongs to the gas vesicle GvpA family. In terms of assembly, the gas vesicle shell is 2 nm thick and consists of a single layer of this protein. It forms helical ribs nearly perpendicular to the long axis of the vesicle.

Its subcellular location is the gas vesicle shell. Its function is as follows. Gas vesicles are hollow, gas filled proteinaceous nanostructures found in some microorganisms. During planktonic growth they allow positioning of the organism at a favorable depth for light or nutrient acquisition. GvpA forms the protein shell. The polypeptide is Gas vesicle protein A (Planktothrix agardhii (Oscillatoria agardhii)).